The chain runs to 523 residues: Cytochrome P450 monooxygenase ple1 (523 aa).

The chain crosses the membrane as a helical span at residues 9–29 (ALPVLAIWAAIGLAYWIDSQK). An N-linked (GlcNAc...) asparagine glycan is attached at N141. C444 serves as a coordination point for heme.

The protein belongs to the cytochrome P450 family. The cofactor is heme.

It is found in the membrane. Its pathway is secondary metabolite biosynthesis; terpenoid biosynthesis. Cytochrome P450 monooxygenase; part of the gene cluster that mediates the biosynthesis of pleuromutilin, a tricyclic diterpene showing antibacterial properties. The geranylgeranyl diphosphate (GGPP) synthase ple4 catalyzes the first step in pleuromutilin biosynthesis. GGPP is then substrate of the premutilin synthase (PS) ple3 to yield premutilin. Premutilin synthase is a bifunctional enzyme composed of the fusion of a class II diterpene cyclase (DTC) and a class I diterpene synthase (DTS), with the corresponding domains and active sites containing characteristic aspartate-rich motifs. GGPP is first converted to mutildienyl-diphosphate (MPP) at the class II DTC site. MPP is subsequently further cyclized at the class I DTS site, followed by a 1,5-hydride shift and addition of water prior to terminating deprotonation, to yield premutilin. The cytochrome P450 monooxygenases ple5 and ple6 hydroxylate premutilin at C-11 and C-3, respectively, producing 11-hydroxypremutilin and 3-hydroxypremutilin. The combination of the actions of both ple5 and ple6 leads to the production of 3,11-dihydroxypremutilin. The short chain dehydrogenase ple7 further converts 3,11-dihydroxypremutilin into mutilin. The acetyltransferase ple2 then acetylates mutilin to produce 14-O-acetylmutilin. Finally, the cytochrome P450 monooxygenase ple1 catalyzes hydroxylation on the alpha position of the acetyl side chain of 14-O-acetylmutilin to yield pleuromutilin. In Rhodocybe pseudopiperita (Clitopilus pseudopiperitus), this protein is Cytochrome P450 monooxygenase ple1.